Here is a 149-residue protein sequence, read N- to C-terminus: Sec-independent protein translocase protein TatB (149 aa).

A helical membrane pass occupies residues 1–21 (MFDIGFTELIVIGIVALVVVG). The tract at residues 92-149 (VDMLDKSVRNEPQNAQTPPQTADAEPAQPDVRQQTLPLEEPDQNRAAGEPSSTSTRPA) is disordered. The segment covering 101–111 (NEPQNAQTPPQ) has biased composition (polar residues).

Belongs to the TatB family. As to quaternary structure, the Tat system comprises two distinct complexes: a TatABC complex, containing multiple copies of TatA, TatB and TatC subunits, and a separate TatA complex, containing only TatA subunits. Substrates initially bind to the TatABC complex, which probably triggers association of the separate TatA complex to form the active translocon.

It is found in the cell inner membrane. Functionally, part of the twin-arginine translocation (Tat) system that transports large folded proteins containing a characteristic twin-arginine motif in their signal peptide across membranes. Together with TatC, TatB is part of a receptor directly interacting with Tat signal peptides. TatB may form an oligomeric binding site that transiently accommodates folded Tat precursor proteins before their translocation. This Thiobacillus denitrificans (strain ATCC 25259 / T1) protein is Sec-independent protein translocase protein TatB.